The sequence spans 40 residues: Dolichyl-diphosphooligosaccharide--protein glycosyltransferase subunit 4 (40 aa).

At 1 to 4 (MITD) the chain is on the lumenal side. The chain crosses the membrane as a helical span at residues 5 to 25 (VQLAIFSNVLGVFLFLLVVAY). Residues 26–40 (HYINANTGKSSPKAK) lie on the Cytoplasmic side of the membrane.

This sequence belongs to the OST4 family. In terms of assembly, component of the oligosaccharyltransferase (OST) complex.

It localises to the endoplasmic reticulum membrane. Functionally, subunit of the oligosaccharyl transferase (OST) complex that catalyzes the initial transfer of a defined glycan (Glc(3)Man(9)GlcNAc(2) in eukaryotes) from the lipid carrier dolichol-pyrophosphate to an asparagine residue within an Asn-X-Ser/Thr consensus motif in nascent polypeptide chains, the first step in protein N-glycosylation. N-glycosylation occurs cotranslationally and the complex associates with the Sec61 complex at the channel-forming translocon complex that mediates protein translocation across the endoplasmic reticulum (ER). All subunits are required for a maximal enzyme activity. The polypeptide is Dolichyl-diphosphooligosaccharide--protein glycosyltransferase subunit 4 (Drosophila persimilis (Fruit fly)).